The following is a 477-amino-acid chain: Oleate hydroxylase FAH12 (477 aa).

A disordered region spans residues 26–48 (YESSAAVSPAESPRTSASSTSLS). The segment covering 27-48 (ESSAAVSPAESPRTSASSTSLS) has biased composition (low complexity). Transmembrane regions (helical) follow at residues 101–118 (AYVL…YLFH) and 133–153 (FVLW…LWVI). The Histidine box-1 motif lies at 155 to 159 (HECGH). A helical membrane pass occupies residues 167 to 187 (FISDLTGWVIHSALLVPYFSW). The Histidine box-2 motif lies at 191–195 (HSAHH). 3 helical membrane-spanning segments follow: residues 234–254 (PIYT…SYLM), 299–319 (YIVL…YLGN), and 327–347 (AVWY…ITFL).

This sequence belongs to the fatty acid desaturase type 1 family.

The protein localises to the microsome membrane. The catalysed reaction is (9Z)-octadecenoate + AH2 + O2 = (12R)-hydroxy-(9Z)-octadecenoate + A + H2O. It participates in lipid metabolism; monounsaturated fatty acid biosynthesis. Functionally, oleate hydroxylase involved in the biosynthesis of ricinoleate (12-hydroxy-cis-9-octadecenoate), that is present at high levels in C.purpurea sclerotium tissue. Exhibits delta(12) hydroxylase activity on 16C and 18C monounsaturated fatty acids (i.e. oleic and palmitoleic acids), and, to a lower extent, gamma(3) hydroxylase activity on ricinoleate. The chain is Oleate hydroxylase FAH12 from Claviceps purpurea (Ergot fungus).